Consider the following 171-residue polypeptide: Peptidyl-prolyl cis-trans isomerase 7 (171 aa).

A PPIase cyclophilin-type domain is found at 7-170; it reads FFDITIAGKP…SECLIADCGQ (164 aa).

Belongs to the cyclophilin-type PPIase family.

The catalysed reaction is [protein]-peptidylproline (omega=180) = [protein]-peptidylproline (omega=0). Functionally, PPIases accelerate the folding of proteins. It catalyzes the cis-trans isomerization of proline imidic peptide bonds in oligopeptides. The polypeptide is Peptidyl-prolyl cis-trans isomerase 7 (cyn-7) (Caenorhabditis elegans).